The chain runs to 359 residues: Lachesin (359 aa).

A signal peptide spans 1-25 (MWRPSISNCVWSTLLLAIFVQQTLA). One can recognise an Ig-like V-type domain in the interval 29-130 (PTISYITQEQ…HKVSAEVKLS (102 aa)). Cysteines 50 and 113 form a disulfide. Residues Asn92 and Asn140 are each glycosylated (N-linked (GlcNAc...) asparagine). 2 Ig-like C2-type domains span residues 135-221 (PVIS…INVE) and 226-317 (PVIT…ARVN). Intrachain disulfides connect Cys157/Cys204 and Cys247/Cys303. Residue Ala336 is the site of GPI-anchor amidated alanine attachment. Residues 337 to 359 (GAEDVSATSFALVGILAALLFAR) constitute a propeptide, removed in mature form.

As to expression, expressed on differentiating neuronal cells from the onset of neurogenesis in both the central and peripheral nervous systems. First detected in the cellularized blastoderm, apart from in the ventral side. Expression persists uniformly in the early ectoderm until the end of gastrulation. From stage 10, expressed in an alternating strong/weak pattern in each segment until stage 15 when it disappears. From stage 11, expressed in subsets of neurons and later subsets of glial cells. From early stage 13, strongly expressed in trachea, hindgut, foregut and the nervous system.

Its subcellular location is the cell membrane. Required for normal tracheal development and maintenance of the trans-epithelial diffusion barrier. Functions as a homophilic cell-adhesion molecule. May play a role in early neuronal differentiation and axon outgrowth. This is Lachesin (Lac) from Drosophila melanogaster (Fruit fly).